Reading from the N-terminus, the 298-residue chain is Inosose dehydratase (298 aa).

This sequence belongs to the IolE/MocC family. Glutathione serves as cofactor. Requires Co(2+) as cofactor. The cofactor is Mn(2+).

It carries out the reaction scyllo-inosose = 3D-3,5/4-trihydroxycyclohexane-1,2-dione + H2O. It participates in polyol metabolism; myo-inositol degradation into acetyl-CoA; acetyl-CoA from myo-inositol: step 2/7. Catalyzes the dehydration of inosose (2-keto-myo-inositol, 2KMI or 2,4,6/3,5-pentahydroxycyclohexanone) to 3D-(3,5/4)-trihydroxycyclohexane-1,2-dione (D-2,3-diketo-4-deoxy-epi-inositol). The polypeptide is Inosose dehydratase (Clostridium beijerinckii (strain ATCC 51743 / NCIMB 8052) (Clostridium acetobutylicum)).